The primary structure comprises 350 residues: Protein-glutamate methylesterase/protein-glutamine glutaminase (350 aa).

In terms of domain architecture, Response regulatory spans 5 to 122; the sequence is KVLCVDDSAL…RDGLIEYSEV (118 aa). A 4-aspartylphosphate modification is found at Asp-56. The CheB-type methylesterase domain occupies 152-346; that stretch reads PFASSEKLVI…ERILTRLGDR (195 aa). Residues Ser-165, His-191, and Asp-288 contribute to the active site.

Belongs to the CheB family. Post-translationally, phosphorylated by CheA. Phosphorylation of the N-terminal regulatory domain activates the methylesterase activity.

It localises to the cytoplasm. It catalyses the reaction [protein]-L-glutamate 5-O-methyl ester + H2O = L-glutamyl-[protein] + methanol + H(+). The catalysed reaction is L-glutaminyl-[protein] + H2O = L-glutamyl-[protein] + NH4(+). In terms of biological role, involved in chemotaxis. Part of a chemotaxis signal transduction system that modulates chemotaxis in response to various stimuli. Catalyzes the demethylation of specific methylglutamate residues introduced into the chemoreceptors (methyl-accepting chemotaxis proteins or MCP) by CheR. Also mediates the irreversible deamidation of specific glutamine residues to glutamic acid. This chain is Protein-glutamate methylesterase/protein-glutamine glutaminase, found in Bordetella parapertussis (strain 12822 / ATCC BAA-587 / NCTC 13253).